The following is a 358-amino-acid chain: MTQKIAVLPGDGIGPEIVEQAVRVLQALNLPLELQEAKVGGAAFDAFEHPLPPATLGLAKSSHAVLFGAVGDWKYDSLPREFRPEQAILGLRRALGLFANLRPAILYPELASASSLKPEIVAGLDIIIIRELTGDIYFGTPRGVRSAPDGVFSGEREGYDTMRYAESEVRRIAHVGFETARKRNKKLCSVDKANVLETSQFWRDIVIEVAREYPDVELSHMYVDNAAMQLVRNPRQFDVIVTGNLFGDILSDEAAMLTGSIGMLPSASLNASGQGLYEPSHGSAPDIAGQGIANPLATILSAAMLLRYSLNQPAQADRIEAAVRKVLAQGLRTADIHEAGTTKVSTSQMGDAVLKALA.

Substrate contacts are provided by Arg-92, Arg-102, Arg-130, and Asp-224. Positions 224, 248, and 252 each coordinate Mg(2+). 282–294 (GSAPDIAGQGIAN) contributes to the NAD(+) binding site.

This sequence belongs to the isocitrate and isopropylmalate dehydrogenases family. LeuB type 1 subfamily. Homodimer. It depends on Mg(2+) as a cofactor. Mn(2+) is required as a cofactor.

The protein localises to the cytoplasm. The catalysed reaction is (2R,3S)-3-isopropylmalate + NAD(+) = 4-methyl-2-oxopentanoate + CO2 + NADH. Its pathway is amino-acid biosynthesis; L-leucine biosynthesis; L-leucine from 3-methyl-2-oxobutanoate: step 3/4. In terms of biological role, catalyzes the oxidation of 3-carboxy-2-hydroxy-4-methylpentanoate (3-isopropylmalate) to 3-carboxy-4-methyl-2-oxopentanoate. The product decarboxylates to 4-methyl-2 oxopentanoate. In Bordetella avium (strain 197N), this protein is 3-isopropylmalate dehydrogenase.